The following is a 143-amino-acid chain: Phosphatidylethanolamine-binding protein homolog R644 (143 aa).

It belongs to the phosphatidylethanolamine-binding protein family.

It is found in the virion. This is Phosphatidylethanolamine-binding protein homolog R644 from Acanthamoeba polyphaga mimivirus (APMV).